A 568-amino-acid polypeptide reads, in one-letter code: PCNA-interacting partner (568 aa).

Residues 442–555 (QIPTCVHPAP…RNNKAVSKKL (114 aa)) form a disordered region. The span at 488–500 (NAWNQTGGKSTQP) shows a compositional bias: polar residues. The segment covering 515 to 527 (ANRECTEQGREEN) has biased composition (basic and acidic residues).

Belongs to the PARI family.

Its subcellular location is the cytoplasm. It localises to the nucleus. Required to suppress inappropriate homologous recombination, thereby playing a central role DNA repair and in the maintenance of genomic stability. The protein is PCNA-interacting partner (parpbp) of Danio rerio (Zebrafish).